A 259-amino-acid polypeptide reads, in one-letter code: Cytochrome c oxidase subunit 3 (259 aa).

7 consecutive transmembrane segments (helical) span residues 13–33, 36–56, 80–100, 125–145, 154–174, 195–215, and 237–257; these read PWPL…TSWF, HGFI…FQWW, GMVL…WAYF, FQIP…VTWA, HAEA…FTLL, FFVA…FLLI, and AWYW…IYWW.

The protein belongs to the cytochrome c oxidase subunit 3 family. As to quaternary structure, component of the cytochrome c oxidase (complex IV, CIV), a multisubunit enzyme composed of a catalytic core of 3 subunits and several supernumerary subunits. The complex exists as a monomer or a dimer and forms supercomplexes (SCs) in the inner mitochondrial membrane with ubiquinol-cytochrome c oxidoreductase (cytochrome b-c1 complex, complex III, CIII).

The protein resides in the mitochondrion inner membrane. The enzyme catalyses 4 Fe(II)-[cytochrome c] + O2 + 8 H(+)(in) = 4 Fe(III)-[cytochrome c] + 2 H2O + 4 H(+)(out). In terms of biological role, component of the cytochrome c oxidase, the last enzyme in the mitochondrial electron transport chain which drives oxidative phosphorylation. The respiratory chain contains 3 multisubunit complexes succinate dehydrogenase (complex II, CII), ubiquinol-cytochrome c oxidoreductase (cytochrome b-c1 complex, complex III, CIII) and cytochrome c oxidase (complex IV, CIV), that cooperate to transfer electrons derived from NADH and succinate to molecular oxygen, creating an electrochemical gradient over the inner membrane that drives transmembrane transport and the ATP synthase. Cytochrome c oxidase is the component of the respiratory chain that catalyzes the reduction of oxygen to water. Electrons originating from reduced cytochrome c in the intermembrane space (IMS) are transferred via the dinuclear copper A center (CU(A)) of subunit 2 and heme A of subunit 1 to the active site in subunit 1, a binuclear center (BNC) formed by heme A3 and copper B (CU(B)). The BNC reduces molecular oxygen to 2 water molecules using 4 electrons from cytochrome c in the IMS and 4 protons from the mitochondrial matrix. This is Cytochrome c oxidase subunit 3 (COIII) from Heterololigo bleekeri (Spear squid).